Here is a 96-residue protein sequence, read N- to C-terminus: Pterin-4-alpha-carbinolamine dehydratase (96 aa).

The protein belongs to the pterin-4-alpha-carbinolamine dehydratase family.

Its subcellular location is the spore wall. It catalyses the reaction (4aS,6R)-4a-hydroxy-L-erythro-5,6,7,8-tetrahydrobiopterin = (6R)-L-erythro-6,7-dihydrobiopterin + H2O. Its function is as follows. Has a role in spore wall formation. The sequence is that of Pterin-4-alpha-carbinolamine dehydratase (omt2) from Schizosaccharomyces pombe (strain 972 / ATCC 24843) (Fission yeast).